A 266-amino-acid chain; its full sequence is Apolipoprotein A-I (266 aa).

Residues 1-18 (MKAVVLTLAVLFLTGSQA) form the signal peptide. Repeat copies occupy residues 67–88 (LKLLDNWDSLTSTVTKLREQIG) and 89–110 (PVTQEFWDNLEKETEVLRQEMS). The 10 X approximate tandem repeats stretch occupies residues 67 to 266 (LKLLDNWDSL…DEAAKKLNAQ (200 aa)). At methionine 109 the chain carries Methionine sulfoxide. A 3; half-length repeat occupies 111 to 121 (KDLEEVKQKVQ). 5 consecutive repeat copies span residues 122 to 142 (PYLDEFQKNWHEEVELYRQKV), 144 to 165 (PLGAELREGARQKLQELQEKLS), 166 to 187 (PLGEELRDRARIHVDALRAQLA), 188 to 210 (PYSDQLRERLAARLQALKEDGGA), and 211 to 231 (SLAEYHAKASEHLSALSEKAK). The stretch at 232–242 (PALEDLRQGLL) is one 9; half-length repeat. Repeat 10 spans residues 243 to 266 (PVLESFKVSLLAAVDEAAKKLNAQ).

The protein belongs to the apolipoprotein A1/A4/E family. As to quaternary structure, homodimer. Interacts with APOA1BP and CLU. Component of a sperm activating protein complex (SPAP), consisting of APOA1, an immunoglobulin heavy chain, an immunoglobulin light chain and albumin. Interacts with NDRG1. Interacts with SCGB3A2. Interacts with NAXE and YJEFN3. In terms of processing, glycosylated. Post-translationally, palmitoylated. Phosphorylation sites are present in the extracellular medium. As to expression, major protein of plasma HDL, also found in chylomicrons.

It localises to the secreted. Participates in the reverse transport of cholesterol from tissues to the liver for excretion by promoting cholesterol efflux from tissues and by acting as a cofactor for the lecithin cholesterol acyltransferase (LCAT). As part of the SPAP complex, activates spermatozoa motility. The sequence is that of Apolipoprotein A-I (APOA1) from Ailuropoda melanoleuca (Giant panda).